Here is a 695-residue protein sequence, read N- to C-terminus: Elongation factor G 2 (695 aa).

One can recognise a tr-type G domain in the interval 5–280; that stretch reads SKYRNIGIFA…AVVDYLPSPT (276 aa). GTP-binding positions include 14–21, 78–82, and 132–135; these read AHVDAGKT, DTPGH, and NKLD.

It belongs to the TRAFAC class translation factor GTPase superfamily. Classic translation factor GTPase family. EF-G/EF-2 subfamily.

The protein resides in the cytoplasm. Catalyzes the GTP-dependent ribosomal translocation step during translation elongation. During this step, the ribosome changes from the pre-translocational (PRE) to the post-translocational (POST) state as the newly formed A-site-bound peptidyl-tRNA and P-site-bound deacylated tRNA move to the P and E sites, respectively. Catalyzes the coordinated movement of the two tRNA molecules, the mRNA and conformational changes in the ribosome. This is Elongation factor G 2 from Vibrio vulnificus (strain YJ016).